We begin with the raw amino-acid sequence, 365 residues long: Putative F-box protein At1g31000 (365 aa).

The F-box domain occupies 15–62 (NDSDSVRIDIVIEIVKRLPLKDVSRFLLVSKLWSEIIRSPYFIRSFPF).

In Arabidopsis thaliana (Mouse-ear cress), this protein is Putative F-box protein At1g31000.